Reading from the N-terminus, the 182-residue chain is MENLTQKEKNYLLSTIRDVKDFPKPGIIFKDITTLLNNKDAFNFLMSHLAKVYKDKNIDFIAGIESRGFIFGAALAAKINIPFVPIRKPKKLPYITISQKYSLEYGFDEIEIHIDAFSGVKNAKVLLIDDLIATGGTAKAAVELINQTNAKCVEACFLINLKDFGGAEKVAEMTKIYSVLEV.

Belongs to the purine/pyrimidine phosphoribosyltransferase family. In terms of assembly, homodimer.

It is found in the cytoplasm. The catalysed reaction is AMP + diphosphate = 5-phospho-alpha-D-ribose 1-diphosphate + adenine. It participates in purine metabolism; AMP biosynthesis via salvage pathway; AMP from adenine: step 1/1. Functionally, catalyzes a salvage reaction resulting in the formation of AMP, that is energically less costly than de novo synthesis. This chain is Adenine phosphoribosyltransferase, found in Campylobacter hominis (strain ATCC BAA-381 / DSM 21671 / CCUG 45161 / LMG 19568 / NCTC 13146 / CH001A).